The primary structure comprises 404 residues: Glucose-1-phosphate adenylyltransferase (404 aa).

Residues tyrosine 99, glycine 164, 179 to 180 (EK), and serine 197 each bind alpha-D-glucose 1-phosphate.

This sequence belongs to the bacterial/plant glucose-1-phosphate adenylyltransferase family. Homotetramer.

The catalysed reaction is alpha-D-glucose 1-phosphate + ATP + H(+) = ADP-alpha-D-glucose + diphosphate. It participates in glycan biosynthesis; glycogen biosynthesis. Functionally, involved in the biosynthesis of ADP-glucose, a building block required for the elongation reactions to produce glycogen. Catalyzes the reaction between ATP and alpha-D-glucose 1-phosphate (G1P) to produce pyrophosphate and ADP-Glc. This is Glucose-1-phosphate adenylyltransferase from Nocardia farcinica (strain IFM 10152).